The primary structure comprises 372 residues: Phenylalanine--tRNA ligase alpha subunit (372 aa).

Glu276 contacts Mg(2+).

Belongs to the class-II aminoacyl-tRNA synthetase family. Phe-tRNA synthetase alpha subunit type 1 subfamily. As to quaternary structure, tetramer of two alpha and two beta subunits. Requires Mg(2+) as cofactor.

The protein localises to the cytoplasm. The catalysed reaction is tRNA(Phe) + L-phenylalanine + ATP = L-phenylalanyl-tRNA(Phe) + AMP + diphosphate + H(+). In Thermobifida fusca (strain YX), this protein is Phenylalanine--tRNA ligase alpha subunit.